The chain runs to 238 residues: Orotidine 5'-phosphate decarboxylase (238 aa).

Substrate-binding positions include aspartate 10, lysine 32, 59–68 (DLKLHDIPNT), threonine 122, arginine 184, glutamine 193, glycine 213, and arginine 214. The active-site Proton donor is the lysine 61.

This sequence belongs to the OMP decarboxylase family. Type 1 subfamily. As to quaternary structure, homodimer.

The enzyme catalyses orotidine 5'-phosphate + H(+) = UMP + CO2. It functions in the pathway pyrimidine metabolism; UMP biosynthesis via de novo pathway; UMP from orotate: step 2/2. Its function is as follows. Catalyzes the decarboxylation of orotidine 5'-monophosphate (OMP) to uridine 5'-monophosphate (UMP). The polypeptide is Orotidine 5'-phosphate decarboxylase (Bacillus cereus (strain ZK / E33L)).